The primary structure comprises 118 residues: MRVKNAVNSKKKKKKILKFVKGFRGALRRRYSLAKQSYYRALKFAFDGRRNKKGNFRKIWITRINIAARNAGLKYNELIHGLKLANVAINRKMLAELAVNDPESFKEYVNIAKAALGK.

The protein belongs to the bacterial ribosomal protein bL20 family.

Functionally, binds directly to 23S ribosomal RNA and is necessary for the in vitro assembly process of the 50S ribosomal subunit. It is not involved in the protein synthesizing functions of that subunit. The sequence is that of Large ribosomal subunit protein bL20 from Fervidobacterium nodosum (strain ATCC 35602 / DSM 5306 / Rt17-B1).